The chain runs to 85 residues: MRTTIRIDDELYREVKAKAARSGRTVAAVLEDAVRRGLNPPKPQAAGRYRVQPSGKGGLRPGVDLSSNAALAEAMNDGVSVDAVR.

Residues 37–60 form a disordered region; the sequence is GLNPPKPQAAGRYRVQPSGKGGLR.

Antitoxin component of a type II toxin-antitoxin (TA) system. The polypeptide is Antitoxin VapB43 (vapB43) (Mycobacterium tuberculosis (strain CDC 1551 / Oshkosh)).